The chain runs to 211 residues: Urease accessory protein UreG (211 aa).

11–18 (GPVGSGKT) is a GTP binding site.

It belongs to the SIMIBI class G3E GTPase family. UreG subfamily. In terms of assembly, homodimer. UreD, UreF and UreG form a complex that acts as a GTP-hydrolysis-dependent molecular chaperone, activating the urease apoprotein by helping to assemble the nickel containing metallocenter of UreC. The UreE protein probably delivers the nickel.

The protein resides in the cytoplasm. Functionally, facilitates the functional incorporation of the urease nickel metallocenter. This process requires GTP hydrolysis, probably effectuated by UreG. The polypeptide is Urease accessory protein UreG (Laribacter hongkongensis (strain HLHK9)).